The chain runs to 1055 residues: Endo-1,4-beta-xylanase A (1055 aa).

The first 29 residues, 1–29, serve as a signal peptide directing secretion; sequence MRKKRRGFLNASTAVLVGILAGFLGVVLA. An a region spans residues 30–357; the sequence is ATGALGFAVR…TTSAEIKLEM (328 aa). The GH10 domain maps to 360–688; sequence EEEIPALKDV…KLAYWAIVAP (329 aa). The active-site Proton donor is the E498. The active-site Nucleophile is E604. 2 CBM-cenC domains span residues 720–851 and 895–1040; these read PIEI…TNSQ and KSVA…PTNN.

It belongs to the glycosyl hydrolase 10 (cellulase F) family.

It carries out the reaction Endohydrolysis of (1-&gt;4)-beta-D-xylosidic linkages in xylans.. This Thermotoga neapolitana protein is Endo-1,4-beta-xylanase A (xynA).